The following is a 240-amino-acid chain: Phosphoribosylaminoimidazole-succinocarboxamide synthase (240 aa).

Belongs to the SAICAR synthetase family.

The catalysed reaction is 5-amino-1-(5-phospho-D-ribosyl)imidazole-4-carboxylate + L-aspartate + ATP = (2S)-2-[5-amino-1-(5-phospho-beta-D-ribosyl)imidazole-4-carboxamido]succinate + ADP + phosphate + 2 H(+). Its pathway is purine metabolism; IMP biosynthesis via de novo pathway; 5-amino-1-(5-phospho-D-ribosyl)imidazole-4-carboxamide from 5-amino-1-(5-phospho-D-ribosyl)imidazole-4-carboxylate: step 1/2. In Neorickettsia sennetsu (strain ATCC VR-367 / Miyayama) (Ehrlichia sennetsu), this protein is Phosphoribosylaminoimidazole-succinocarboxamide synthase.